Here is a 554-residue protein sequence, read N- to C-terminus: Rab GTPase-binding effector protein 2 (554 aa).

Disordered regions lie at residues 1–28 (MAAA…SELS), 167–208 (IQRR…GPAA), and 371–395 (GLRA…DEAL). The span at 14 to 28 (PQEKQKDASESSELS) shows a compositional bias: basic and acidic residues. Positions 15–173 (QEKQKDASES…IQEIQRRPRQ (159 aa)) form a coiled coil. 4 positions are modified to phosphoserine: serine 176, serine 180, serine 187, and serine 191. Residues 274 to 509 (DSQWEQLQVE…QAELETSEQV (236 aa)) adopt a coiled-coil conformation.

It belongs to the rabaptin family. As to quaternary structure, heterodimer with RABGEF1. The dimer binds RAB5A that has been activated by GTP-binding. Interacts with SDCCAG8; this interaction is important for ciliogenesis regulation. Interacts with RAB4A; this interaction may mediate VEGFR2 cell surface expression.

It localises to the cytoplasm. It is found in the early endosome. Its subcellular location is the cytoskeleton. The protein localises to the microtubule organizing center. The protein resides in the centrosome. It localises to the cilium basal body. Its function is as follows. Plays a role in membrane trafficking and in homotypic early endosome fusion. Participates in arteriogenesis by regulating vascular endothelial growth factor receptor 2/VEGFR2 cell surface expression and endosomal trafficking. By interacting with SDCCAG8, localizes to centrosomes and plays a critical role in ciliogenesis. The polypeptide is Rab GTPase-binding effector protein 2 (Rabep2) (Mus musculus (Mouse)).